Here is a 346-residue protein sequence, read N- to C-terminus: NADH-ubiquinone oxidoreductase chain 2 (346 aa).

The next 11 helical transmembrane spans lie at 1–21 (MNPH…TITI), 25–45 (HWVL…PLIS), 60–80 (FLTQ…NAWA), 95–115 (CLLL…HFWF), 124–144 (LMTA…LLLM), 149–169 (LNPA…GWMG), 178–195 (ILAF…IILV), 200–219 (LALL…FMAL), 242–262 (ATLM…GFMP), 274–294 (EMTP…FFYL), and 326–346 (AILA…HAIV).

Belongs to the complex I subunit 2 family.

The protein resides in the mitochondrion inner membrane. It carries out the reaction a ubiquinone + NADH + 5 H(+)(in) = a ubiquinol + NAD(+) + 4 H(+)(out). Core subunit of the mitochondrial membrane respiratory chain NADH dehydrogenase (Complex I) that is believed to belong to the minimal assembly required for catalysis. Complex I functions in the transfer of electrons from NADH to the respiratory chain. The immediate electron acceptor for the enzyme is believed to be ubiquinone. The chain is NADH-ubiquinone oxidoreductase chain 2 (MT-ND2) from Sibirionetta formosa (Baikal teal).